A 496-amino-acid polypeptide reads, in one-letter code: 2-methylcitrate dehydratase-like protein oryR (496 aa).

This sequence belongs to the PrpD family.

Its pathway is secondary metabolite biosynthesis. In terms of biological role, 2-methylcitrate dehydratase-like protein; part of the gene cluster that mediates the biosynthesis of oryzines, natural products with an unusual maleidride backbone. The two subunits of the fungal fatty acid synthase oryfasA and oryfasB probably form octenoic acid. This fatty acid is most likely activated by the acyl-CoA ligase oryP to give octenyl-CoA before the citrate synthase-like protein oryE catalyzes condensation with oxaloacetate to form tricarboxylic acid. The next steps of the pathways are conjectural, but a favorite possible route has been proposed, beginning with decarboxylation and concomitant dehydration by the decarboxylase oryM, followed by tautomerization, which may lead to the production of a diene intermediate. Reduction of this diene intermediate could give the known metabolite piliformic acid. On the pathway to oryzine B and oryzine A, however, hydroxylation of the diene by the alpha-ketoglutarate-dependent dioxygenase oryG and lactonisation by the lactonohydrolases oryH or oryL could give oryzine B directly. Finally, enoyl reduction by the dehydrogenase oryD would then convert oryzine B into oryzine A. In Aspergillus oryzae (strain ATCC 42149 / RIB 40) (Yellow koji mold), this protein is 2-methylcitrate dehydratase-like protein oryR.